The sequence spans 502 residues: Probable glycine dehydrogenase (decarboxylating) subunit 2 (502 aa).

Residue Lys-273 is modified to N6-(pyridoxal phosphate)lysine.

The protein belongs to the GcvP family. C-terminal subunit subfamily. As to quaternary structure, the glycine cleavage system is composed of four proteins: P, T, L and H. In this organism, the P 'protein' is a heterodimer of two subunits. It depends on pyridoxal 5'-phosphate as a cofactor.

It catalyses the reaction N(6)-[(R)-lipoyl]-L-lysyl-[glycine-cleavage complex H protein] + glycine + H(+) = N(6)-[(R)-S(8)-aminomethyldihydrolipoyl]-L-lysyl-[glycine-cleavage complex H protein] + CO2. Its function is as follows. The glycine cleavage system catalyzes the degradation of glycine. The P protein binds the alpha-amino group of glycine through its pyridoxal phosphate cofactor; CO(2) is released and the remaining methylamine moiety is then transferred to the lipoamide cofactor of the H protein. The chain is Probable glycine dehydrogenase (decarboxylating) subunit 2 from Pyrococcus abyssi (strain GE5 / Orsay).